Reading from the N-terminus, the 104-residue chain is Small ribosomal subunit protein bS6 (104 aa).

It belongs to the bacterial ribosomal protein bS6 family.

Binds together with bS18 to 16S ribosomal RNA. In Elusimicrobium minutum (strain Pei191), this protein is Small ribosomal subunit protein bS6.